We begin with the raw amino-acid sequence, 126 residues long: Fatty acid-binding protein 10-A, liver basic (126 aa).

4 residues coordinate cholate: Lys-57, Lys-77, His-99, and Gln-101.

This sequence belongs to the calycin superfamily. Fatty-acid binding protein (FABP) family. Expressed in the developing embryonic liver from 48 hpf. Also expressed in the liver of 5-day-old larvae. In adults, primarily expressed in the liver, with weak expression in the testis and intestine.

It is found in the cytoplasm. In terms of biological role, binds hydrophobic ligands, such as cholate, in the cytoplasm. May be involved in intracellular lipid transport. Binds one cholate per subunit. The sequence is that of Fatty acid-binding protein 10-A, liver basic (fabp10a) from Danio rerio (Zebrafish).